The sequence spans 477 residues: ATP synthase subunit beta (477 aa).

ATP is bound at residue 151-158 (GGAGVGKT).

It belongs to the ATPase alpha/beta chains family. As to quaternary structure, F-type ATPases have 2 components, CF(1) - the catalytic core - and CF(0) - the membrane proton channel. CF(1) has five subunits: alpha(3), beta(3), gamma(1), delta(1), epsilon(1). CF(0) has three main subunits: a(1), b(2) and c(9-12). The alpha and beta chains form an alternating ring which encloses part of the gamma chain. CF(1) is attached to CF(0) by a central stalk formed by the gamma and epsilon chains, while a peripheral stalk is formed by the delta and b chains.

The protein localises to the cell inner membrane. The enzyme catalyses ATP + H2O + 4 H(+)(in) = ADP + phosphate + 5 H(+)(out). In terms of biological role, produces ATP from ADP in the presence of a proton gradient across the membrane. The catalytic sites are hosted primarily by the beta subunits. This is ATP synthase subunit beta from Bradyrhizobium diazoefficiens (strain JCM 10833 / BCRC 13528 / IAM 13628 / NBRC 14792 / USDA 110).